Reading from the N-terminus, the 286-residue chain is MAEITAKLVKELREKTGAGMMDCKKALGESGGDMEKATEWLRQKGITSAEKKSGRITAEGLIHSYIHTGGRIGVLVELNCETDFVARGDTFKDLVNNIAMQIAACPNVEYVRVEDIPEAVAQKEKEIEKGRDDLAGKPENIKDKIVEGRIGKRLKELSLMDQPYIKDQSITVAELIKQTIAQIGENIQVRRFVRFVLGEGIEKEEKNFAEEVAAQTGQKVEQPQAAQETAKVEPPTPETVEEVEPPVTPPAQETDSPAAETTTEPPKTTPVDKPKGSPSKKGKKKK.

The tract at residues 82–85 is involved in Mg(2+) ion dislocation from EF-Tu; it reads TDFV. Residues 212-286 form a disordered region; that stretch reads VAAQTGQKVE…SPSKKGKKKK (75 aa). Residues 215–227 show a composition bias toward polar residues; that stretch reads QTGQKVEQPQAAQ. Residues 253–269 are compositionally biased toward low complexity; the sequence is ETDSPAAETTTEPPKTT.

This sequence belongs to the EF-Ts family.

The protein localises to the cytoplasm. Its function is as follows. Associates with the EF-Tu.GDP complex and induces the exchange of GDP to GTP. It remains bound to the aminoacyl-tRNA.EF-Tu.GTP complex up to the GTP hydrolysis stage on the ribosome. The protein is Elongation factor Ts of Gloeothece citriformis (strain PCC 7424) (Cyanothece sp. (strain PCC 7424)).